Reading from the N-terminus, the 382-residue chain is Chaperone protein DnaJ 1 (382 aa).

The 65-residue stretch at 4-68 folds into the J domain; the sequence is DYYGILGVDR…DKRRIVDMGG (65 aa). The CR-type zinc-finger motif lies at 134–216; the sequence is GAKKDLTLDT…CAGDGRVRAR (83 aa). Positions 147, 150, 164, 167, 190, 193, 204, and 207 each coordinate Zn(2+). CXXCXGXG motif repeat units lie at residues 147–154, 164–171, 190–197, and 204–211; these read CTKCHGSG, CGTCNGAG, CHTCDGTG, and CTECAGDG.

It belongs to the DnaJ family. In terms of assembly, homodimer. Zn(2+) is required as a cofactor.

The protein localises to the cytoplasm. Its function is as follows. Participates actively in the response to hyperosmotic and heat shock by preventing the aggregation of stress-denatured proteins and by disaggregating proteins, also in an autonomous, DnaK-independent fashion. Unfolded proteins bind initially to DnaJ; upon interaction with the DnaJ-bound protein, DnaK hydrolyzes its bound ATP, resulting in the formation of a stable complex. GrpE releases ADP from DnaK; ATP binding to DnaK triggers the release of the substrate protein, thus completing the reaction cycle. Several rounds of ATP-dependent interactions between DnaJ, DnaK and GrpE are required for fully efficient folding. Also involved, together with DnaK and GrpE, in the DNA replication of plasmids through activation of initiation proteins. This Corynebacterium glutamicum (strain ATCC 13032 / DSM 20300 / JCM 1318 / BCRC 11384 / CCUG 27702 / LMG 3730 / NBRC 12168 / NCIMB 10025 / NRRL B-2784 / 534) protein is Chaperone protein DnaJ 1.